The chain runs to 920 residues: Isoleucine--tRNA ligase (920 aa).

Positions 58 to 68 (PYANGHLHLGH) match the 'HIGH' region motif. Position 569 (glutamate 569) interacts with L-isoleucyl-5'-AMP. Residues 610–614 (KMSKS) carry the 'KMSKS' region motif. Lysine 613 is an ATP binding site. The Zn(2+) site is built by cysteine 895, cysteine 898, cysteine 910, and cysteine 913.

It belongs to the class-I aminoacyl-tRNA synthetase family. IleS type 1 subfamily. As to quaternary structure, monomer. Requires Zn(2+) as cofactor.

Its subcellular location is the cytoplasm. It catalyses the reaction tRNA(Ile) + L-isoleucine + ATP = L-isoleucyl-tRNA(Ile) + AMP + diphosphate. In terms of biological role, catalyzes the attachment of isoleucine to tRNA(Ile). As IleRS can inadvertently accommodate and process structurally similar amino acids such as valine, to avoid such errors it has two additional distinct tRNA(Ile)-dependent editing activities. One activity is designated as 'pretransfer' editing and involves the hydrolysis of activated Val-AMP. The other activity is designated 'posttransfer' editing and involves deacylation of mischarged Val-tRNA(Ile). The protein is Isoleucine--tRNA ligase of Helicobacter pylori (strain G27).